The following is a 1822-amino-acid chain: Signal-induced proliferation-associated 1-like protein 1 (1822 aa).

Disordered stretches follow at residues 1 to 30 (MTSL…PKVH) and 47 to 125 (GSSV…VSLN). Positions 84–94 (PPRKENVKESS) are enriched in basic and acidic residues. Positions 95-125 (RSSQEIETSSCLESLSSKGSPVSQGSSVSLN) are enriched in low complexity. Residues Ser-162, Ser-187, Ser-193, Ser-208, Ser-255, and Ser-288 each carry the phosphoserine modification. The disordered stretch occupies residues 277 to 297 (EREKPLKRRSKSETGDSSIFR). Residues 638–855 (FMKLDEQGLN…RTRQEYLKDL (218 aa)) enclose the Rap-GAP domain. The 77-residue stretch at 992 to 1068 (EMTLRRNGLG…VKVVIIPPHD (77 aa)) folds into the PDZ domain. A phosphoserine mark is found at Ser-1117, Ser-1126, Ser-1155, Ser-1166, Ser-1188, Ser-1209, and Ser-1220. Residues 1134 to 1165 (AGKGDGKMPLPERAANIPRSISSDGRPLERRL) are disordered. Residues 1183-1252 (SQCRNSPSNL…WQRSEDSLAD (70 aa)) are disordered. The span at 1188–1198 (SPSNLSSSSET) shows a compositional bias: low complexity. Positions 1225-1244 (DRQNTQSDIGGSGKSTPSWQ) are enriched in polar residues. Phosphoserine occurs at positions 1273 and 1288. The tract at residues 1286-1324 (HLSPNKQGHSDSHYSSHSSSNTLSSNASSAHSDEKWYDG) is disordered. The span at 1300 to 1315 (SSHSSSNTLSSNASSA) shows a compositional bias: low complexity. Position 1344 is a phosphoserine; by PLK2 (Ser-1344). Thr-1348 is modified (phosphothreonine; by PLK2). The segment covering 1358–1367 (TASLGASTSS) has biased composition (low complexity). The disordered stretch occupies residues 1358-1382 (TASLGASTSSPRSGPGKEKVAPLWH). At Ser-1367 the chain carries Phosphoserine; by CDK5. Ser-1384 carries the post-translational modification Phosphoserine. A compositionally biased stretch (basic and acidic residues) spans 1395–1407 (LETEGHGMDRKTE). The segment at 1395–1493 (LETEGHGMDR…SSSGPRTFYP (99 aa)) is disordered. Phosphoserine occurs at positions 1408, 1409, 1430, 1449, and 1451. Residues 1417–1436 (KSQGGSSPLTRENSTFSIND) show a composition bias toward polar residues. Composition is skewed to low complexity over residues 1437–1451 (ATSH…HSAS) and 1471–1486 (SSQL…SSSS). Ser-1546 and Ser-1567 each carry phosphoserine. The disordered stretch occupies residues 1567-1595 (SPTPESQKNFKFHGLSSPQSPFPSTPTSR). Phosphothreonine is present on Thr-1569. Ser-1572, Ser-1583, Ser-1586, Ser-1603, and Ser-1606 each carry phosphoserine. Arg-1619 carries the post-translational modification Asymmetric dimethylarginine. Residues Ser-1621, Ser-1665, Ser-1668, Ser-1726, Ser-1729, Ser-1746, Ser-1747, and Ser-1752 each carry the phosphoserine modification. Positions 1753 to 1813 (PTLASKVDQL…ASDKLKKFTE (61 aa)) form a coiled coil.

As to quaternary structure, interacts (via PDZ domain) with EPHA4 (via PDZ motif); controls neuronal morphology through regulation of the RAP1 (RAP1A or RAP1B) and RAP2 (RAP2A, RAP2B or RAP2C) GTPases. Interacts with DLG4, PDLIM5, PDLIM7 and LZTS3. Interacts with the actin cytoskeleton. Ubiquitinated and degraded by the SCF(BTRC) following phosphorylation by PLK2. In terms of processing, phosphorylated at Ser-1367 by CDK5, creating a docking site for the POLO box domains of PLK2. Subsequently, PLK2 binds and phosphorylates SIPA1L1, leading to ubiquitination and degradation by the proteasome. As to expression, detected in brain (at protein level).

The protein resides in the cytoplasm. It is found in the cytoskeleton. It localises to the postsynaptic density. Its subcellular location is the synapse. The protein localises to the synaptosome. Functionally, stimulates the GTPase activity of RAP2A. Promotes reorganization of the actin cytoskeleton and recruits DLG4 to F-actin. Contributes to the regulation of dendritic spine morphogenesis. This chain is Signal-induced proliferation-associated 1-like protein 1 (Sipa1l1), found in Rattus norvegicus (Rat).